A 266-amino-acid chain; its full sequence is Ribosome-recycling factor, chloroplastic (266 aa).

A compositionally biased stretch (low complexity) spans 1–26 (MPPLHAVSPAAAAAPPRALSSAARVP). Positions 1 to 30 (MPPLHAVSPAAAAAPPRALSSAARVPQRPG) are disordered. Residues 1–74 (MPPLHAVSPA…SDKRAVLRHA (74 aa)) constitute a chloroplast transit peptide. Coiled coils occupy residues 75 to 109 (TIEE…NTVR) and 207 to 266 (VAIR…LMKI).

The protein belongs to the RRF family.

The protein localises to the plastid. The protein resides in the chloroplast. Responsible for the release of ribosomes from messenger RNA at the termination of chloroplastic protein biosynthesis. This Oryza sativa subsp. indica (Rice) protein is Ribosome-recycling factor, chloroplastic.